A 115-amino-acid polypeptide reads, in one-letter code: Cyclin-dependent protein kinase inhibitor SMR3 (115 aa).

The span at Lys17–Pro36 shows a compositional bias: basic and acidic residues. The tract at residues Lys17 to Thr82 is disordered. A compositionally biased stretch (basic residues) spans Arg67–Leu81.

Interacts with CDKA-1 and D-type cyclins. Expressed at low levels in roots and stems.

The protein resides in the nucleus. Functionally, probable cyclin-dependent protein kinase (CDK) inhibitor that functions as a repressor of mitosis in the endoreduplication cell cycle. The sequence is that of Cyclin-dependent protein kinase inhibitor SMR3 from Arabidopsis thaliana (Mouse-ear cress).